Consider the following 393-residue polypeptide: NAD(P)H-quinone oxidoreductase subunit H, chloroplastic (393 aa).

The protein belongs to the complex I 49 kDa subunit family. In terms of assembly, NDH is composed of at least 16 different subunits, 5 of which are encoded in the nucleus.

The protein localises to the plastid. It is found in the chloroplast thylakoid membrane. It carries out the reaction a plastoquinone + NADH + (n+1) H(+)(in) = a plastoquinol + NAD(+) + n H(+)(out). The enzyme catalyses a plastoquinone + NADPH + (n+1) H(+)(in) = a plastoquinol + NADP(+) + n H(+)(out). Functionally, NDH shuttles electrons from NAD(P)H:plastoquinone, via FMN and iron-sulfur (Fe-S) centers, to quinones in the photosynthetic chain and possibly in a chloroplast respiratory chain. The immediate electron acceptor for the enzyme in this species is believed to be plastoquinone. Couples the redox reaction to proton translocation, and thus conserves the redox energy in a proton gradient. In Sorghum bicolor (Sorghum), this protein is NAD(P)H-quinone oxidoreductase subunit H, chloroplastic.